The chain runs to 219 residues: MLSMFMYNNIIDYVHVHDIEDEASDNDDRDYVYPLPENMVYRFDKSTNILDYLSTERDHVMMAVQYYMSKQRLDDLYRQLPTKTRSYVDIINTYCDKVNNDYNSDMNIMCDMASTESFTVYDINNEVNTILMNNKGLGVRLATISFITELGRRCMNPVETIKMFTLLSHTICDDYFVDYITYISAPRDNAIHSTREYLKIMGIAVIMFATYKTLKYMIG.

This sequence belongs to the orthopoxvirus OPG045 family. In terms of assembly, homodimer. Interacts with host pro-apoptotic protein BCL2L11 (via BH3 domain). Interacts with host NLRP1. Interacts with host BAK.

It is found in the host mitochondrion outer membrane. It localises to the host cytoplasm. In terms of biological role, plays a role in evading host innate immune response by inhibiting host inflammasome activation. Interacts with and inhibits NLR-mediated interleukin-1 beta/IL1B production in infected cells. At the host mitochondria outer membrane, interacts with the BH3 domain of host BAK and prevents BAK from binding active BAX. In turn, host apoptosis is inhibited. This Cynomys gunnisoni (Gunnison's prairie dog) protein is Apoptosis regulator OPG045 (OPG045).